Here is a 294-residue protein sequence, read N- to C-terminus: Non-selective voltage-gated ion channel VDAC2 (294 aa).

Ala2 carries the post-translational modification N-acetylalanine. Positions 23 and 31 each coordinate ATP. Position 31 is an N6-acetyllysine; alternate (Lys31). Residue Lys31 is modified to N6-succinyllysine; alternate. Lys31 participates in a covalent cross-link: Glycyl lysine isopeptide (Lys-Gly) (interchain with G-Cter in ubiquitin); alternate. Beta stranded transmembrane passes span Leu37–Ser46 and Val50–Ser58. A Glycyl lysine isopeptide (Lys-Gly) (interchain with G-Cter in ubiquitin) cross-link involves residue Lys64. Residues Val65–Trp75 traverse the membrane as a beta stranded segment. A Phosphotyrosine modification is found at Tyr78. 3 beta stranded membrane passes run Leu80–Asn87, Thr91–Asp100, and Leu106–Ser115. Thr118 carries the post-translational modification Phosphothreonine. Lys120 is subject to N6-acetyllysine; alternate. Residue Lys120 forms a Glycyl lysine isopeptide (Lys-Gly) (interchain with G-Cter in ubiquitin); alternate linkage. Residue Lys121 forms a Glycyl lysine isopeptide (Lys-Gly) (interchain with G-Cter in ubiquitin) linkage. 4 beta stranded membrane passes run Ser122–Arg131, Ile134–Asp141, Ala148–Gly156, and Leu161–Asp169. A Glycyl lysine isopeptide (Lys-Gly) (interchain with G-Cter in ubiquitin) cross-link involves residue Lys172. Beta stranded transmembrane passes span Lys174–Thr186, Phe189–Asn196, Glu200–Val209, Leu213–Thr222, Arg229–Leu238, and Ala242–Asn249. Residue Ser251 is modified to Phosphoserine. NAD(+) is bound by residues Leu253–Gly255 and Ser271–Asp275. The next 2 beta stranded transmembrane spans lie at Leu253–Leu262 and Gly265–Val274. An N6-acetyllysine; alternate modification is found at Lys277. Lys277 participates in a covalent cross-link: Glycyl lysine isopeptide (Lys-Gly) (interchain with G-Cter in ubiquitin); alternate. Residues His284 to Glu293 form a beta stranded membrane-spanning segment.

It belongs to the eukaryotic mitochondrial porin family. In terms of assembly, monomer, homodimer and higher order oligomers; formation of higher order structures is necessary for scramblase activity. Interacts with ARMC12 in a TBC1D21-dependent manner. Interacts with KLC3. Interacts with SPATA33. Interacts with PPP3CC in a SPATA33-dependent manner. Ubiquitinated by PRKN during mitophagy, leading to its degradation and enhancement of mitophagy. Deubiquitinated by USP30.

The protein localises to the mitochondrion outer membrane. It is found in the membrane. It catalyses the reaction chloride(in) = chloride(out). The catalysed reaction is K(+)(in) = K(+)(out). The enzyme catalyses a 1,2-diacyl-sn-glycero-3-phospho-L-serine(in) = a 1,2-diacyl-sn-glycero-3-phospho-L-serine(out). It carries out the reaction a 1,2-diacyl-sn-glycero-3-phosphocholine(in) = a 1,2-diacyl-sn-glycero-3-phosphocholine(out). It catalyses the reaction a 1,2-diacyl-sn-glycero-3-phospho-(1D-myo-inositol)(in) = a 1,2-diacyl-sn-glycero-3-phospho-(1D-myo-inositol)(out). In terms of biological role, non-selective voltage-gated ion channel that mediates the transport of anions and cations through the mitochondrion outer membrane and plasma membrane. The channel adopts an open conformation at zero mV and a closed conformation at both positive and negative potentials. There are two populations of channels; the main that functions in a lower open-state conductance with lower ion selectivity, that switch, in a voltage-dependent manner, from the open to a low-conducting 'closed' state and the other that has a normal ion selectivity in the typical high conductance, 'open' state. Binds various lipids, including the sphingolipid ceramide, the phospholipid phosphatidylcholine, and the sterols cholesterol and oxysterol. Binding of ceramide promotes the mitochondrial outer membrane permeabilization (MOMP) apoptotic pathway. Functionally, catalyzes the scrambling of phospholipids across the outer mitochondrial membrane; the mechanism is unrelated to channel activity and is capable of translocating both anionic and zwitterionic phospholipids. This is Non-selective voltage-gated ion channel VDAC2 from Bos taurus (Bovine).